A 422-amino-acid chain; its full sequence is Tyrosine--tRNA ligase (422 aa).

Tyr-37 contacts L-tyrosine. A 'HIGH' region motif is present at residues 42–51; sequence PTEESLHIGH. Residues Tyr-175 and Gln-179 each contribute to the L-tyrosine site. The 'KMSKS' region motif lies at 235–239; that stretch reads KFGKT. Lys-238 lines the ATP pocket. The S4 RNA-binding domain occupies 357–414; that stretch reads KDLQEALVLTSLAQSRTQAKNMIISNSISINTEKIRKNHIFHEKDKLFGKFTLLSRGK.

This sequence belongs to the class-I aminoacyl-tRNA synthetase family. TyrS type 1 subfamily. Homodimer.

The protein resides in the cytoplasm. The catalysed reaction is tRNA(Tyr) + L-tyrosine + ATP = L-tyrosyl-tRNA(Tyr) + AMP + diphosphate + H(+). In terms of biological role, catalyzes the attachment of tyrosine to tRNA(Tyr) in a two-step reaction: tyrosine is first activated by ATP to form Tyr-AMP and then transferred to the acceptor end of tRNA(Tyr). In Buchnera aphidicola subsp. Acyrthosiphon pisum (strain APS) (Acyrthosiphon pisum symbiotic bacterium), this protein is Tyrosine--tRNA ligase.